The following is a 61-amino-acid chain: Alpha-conotoxine-like Am1.4 (61 aa).

The N-terminal stretch at Met1 to Ser21 is a signal peptide. A propeptide spanning residues Phe22–Lys44 is cleaved from the precursor.

It belongs to the conotoxin A superfamily. In terms of processing, is not hydroxylated. Contains 2 disulfide bonds. In terms of tissue distribution, expressed by the venom duct.

It localises to the secreted. Functionally, alpha-conotoxins act on postsynaptic membranes, they bind to the nicotinic acetylcholine receptors (nAChR) and thus inhibit them. In Conus amadis (Amadis cone), this protein is Alpha-conotoxine-like Am1.4.